We begin with the raw amino-acid sequence, 125 residues long: MAISKEEVLEYIGSLSVLELAELVKMFEEKFGVSATPTVVAGAAVAGGAAAESEEKTEFNVILADSGAEKIKVIKVVREITGLGLKEAKDATEKTPHVLKEGVNKEEAETIKKKLEEVGAKVEVK.

Belongs to the bacterial ribosomal protein bL12 family. As to quaternary structure, homodimer. Part of the ribosomal stalk of the 50S ribosomal subunit. Forms a multimeric L10(L12)X complex, where L10 forms an elongated spine to which 2 to 4 L12 dimers bind in a sequential fashion. Binds GTP-bound translation factors.

Its function is as follows. Forms part of the ribosomal stalk which helps the ribosome interact with GTP-bound translation factors. Is thus essential for accurate translation. This is Large ribosomal subunit protein bL12 from Helicobacter pylori (strain P12).